A 158-amino-acid polypeptide reads, in one-letter code: Large ribosomal subunit protein uL11 (158 aa).

This sequence belongs to the universal ribosomal protein uL11 family. In terms of assembly, part of the ribosomal stalk of the 50S ribosomal subunit. Interacts with L10 and the large rRNA to form the base of the stalk. L10 forms an elongated spine to which L12 dimers bind in a sequential fashion forming a multimeric L10(L12)X complex.

Forms part of the ribosomal stalk which helps the ribosome interact with GTP-bound translation factors. The sequence is that of Large ribosomal subunit protein uL11 from Methanocella arvoryzae (strain DSM 22066 / NBRC 105507 / MRE50).